Here is a 167-residue protein sequence, read N- to C-terminus: MGLGDYSHCRQRMSRGLYGVSGRAALWSPVFHPVHRMPCGTWRIGIEVPEHVRASSPVLEHLRRQLERAFQRAAARGRARRAREAVAAVAAAAAAAREERSRTRMECALARLRAELLELRFQNHQLARTLLDLNMKMQQLKKRQDQELASKPQSPQDKEMNSECGSA.

The interval 140–167 (LKKRQDQELASKPQSPQDKEMNSECGSA) is disordered.

In terms of tissue distribution, preferentially expressed in testis both in embryo and adult. Expressed at much lower level in other tissues.

The polypeptide is Alanine- and arginine-rich domain-containing protein (Aard) (Mus musculus (Mouse)).